Here is a 329-residue protein sequence, read N- to C-terminus: Beta-ketoacyl-[acyl-carrier-protein] synthase III (329 aa).

Catalysis depends on residues Cys-114 and His-255. Positions 256–260 are ACP-binding; the sequence is QANQR. Residue Asn-285 is part of the active site.

The protein belongs to the thiolase-like superfamily. FabH family. Homodimer.

The protein resides in the cytoplasm. It catalyses the reaction malonyl-[ACP] + acetyl-CoA + H(+) = 3-oxobutanoyl-[ACP] + CO2 + CoA. It functions in the pathway lipid metabolism; fatty acid biosynthesis. Functionally, catalyzes the condensation reaction of fatty acid synthesis by the addition to an acyl acceptor of two carbons from malonyl-ACP. Catalyzes the first condensation reaction which initiates fatty acid synthesis and may therefore play a role in governing the total rate of fatty acid production. Possesses both acetoacetyl-ACP synthase and acetyl transacylase activities. Its substrate specificity determines the biosynthesis of branched-chain and/or straight-chain of fatty acids. The chain is Beta-ketoacyl-[acyl-carrier-protein] synthase III from Trichodesmium erythraeum (strain IMS101).